Consider the following 70-residue polypeptide: U-actitoxin-Ael2c (70 aa).

The signal sequence occupies residues 1–21 (SYQRFLFLVVVASLIATSLAI). Positions 22-26 (PKDLE) are excised as a propeptide. Intrachain disulfides connect Cys-32/Cys-65, Cys-34/Cys-58, and Cys-48/Cys-66.

It belongs to the sea anemone type 3 (BDS) potassium channel toxin family.

The protein localises to the secreted. Its subcellular location is the nematocyst. In terms of biological role, potently and selectively inhibits voltage-gated potassium channels Kv11/KCNH/ERG. Acts as a gating-modifier toxin that shifts the voltage-dependence of ERG activation in the positive direction and suppresses its current amplitudes elicited by strong depolarizing pulses that maximally activate the channels. In Anthopleura elegantissima (Green aggregating anemone), this protein is U-actitoxin-Ael2c.